Here is a 199-residue protein sequence, read N- to C-terminus: Nucleoside triphosphate pyrophosphatase (199 aa).

The active-site Proton acceptor is Asp76.

Belongs to the Maf family. The cofactor is a divalent metal cation.

The protein resides in the cytoplasm. It catalyses the reaction a ribonucleoside 5'-triphosphate + H2O = a ribonucleoside 5'-phosphate + diphosphate + H(+). The enzyme catalyses a 2'-deoxyribonucleoside 5'-triphosphate + H2O = a 2'-deoxyribonucleoside 5'-phosphate + diphosphate + H(+). Its function is as follows. Nucleoside triphosphate pyrophosphatase. May have a dual role in cell division arrest and in preventing the incorporation of modified nucleotides into cellular nucleic acids. The polypeptide is Nucleoside triphosphate pyrophosphatase (Ruegeria pomeroyi (strain ATCC 700808 / DSM 15171 / DSS-3) (Silicibacter pomeroyi)).